We begin with the raw amino-acid sequence, 230 residues long: Protein FAM3A (230 aa).

An N-terminal signal peptide occupies residues 1–33 (MRLAGPLRIVALVVSVGLTWIVVSILLGGPGSG). Intrachain disulfides connect C59/C87 and C65/C222. The GG-type lectin domain maps to 68–226 (EHLAFRVVSG…LEMEGCIPRR (159 aa)).

It belongs to the FAM3 family.

The protein resides in the secreted. This is Protein FAM3A (FAM3A) from Pongo abelii (Sumatran orangutan).